An 842-amino-acid chain; its full sequence is 9-beta-pimara-7,15-diene synthase, chloroplastic (842 aa).

The transit peptide at 1 to 56 (MASPMEAVARSSLVLAPRRRRALGLLPAAAAAAPFVLDCRRRHNGGMRRPHVSFAC) directs the protein to the chloroplast. Residues Asp-591, Asp-595, Asn-735, Ser-739, and Glu-743 each contribute to the Mg(2+) site. The DDXXD motif signature appears at 591-595 (DDFFD).

The protein belongs to the terpene synthase family. The cofactor is Mg(2+). Expressed in roots.

It localises to the plastid. It is found in the chloroplast. It catalyses the reaction 9alpha-copalyl diphosphate = 9beta-pimara-7,15-diene + diphosphate. Its function is as follows. Involved in the biosynthesis of momilactone A and B phytoalexins. Catalyzes the conversion of syn-copalyl diphosphate to the phytoalexin precursor syn-pimara-7,15-diene. This chain is 9-beta-pimara-7,15-diene synthase, chloroplastic, found in Oryza sativa subsp. japonica (Rice).